A 741-amino-acid chain; its full sequence is Catalase-peroxidase 2 (741 aa).

Positions 1–27 are cleaved as a signal peptide; it reads MKINTLPTLSALTLAMSLALGAGMATA. The segment at residues 106–229 is a cross-link (tryptophyl-tyrosyl-methioninium (Trp-Tyr) (with M-255)); that stretch reads WHSAGVYRIF…MGATQMGLIY (124 aa). Catalysis depends on histidine 107, which acts as the Proton acceptor. Residues 229–255 constitute a cross-link (tryptophyl-tyrosyl-methioninium (Tyr-Met) (with W-106)); that stretch reads YVNPEGPNGVPDPLASAKEIRDTFGRM. A heme b-binding site is contributed by histidine 270.

This sequence belongs to the peroxidase family. Peroxidase/catalase subfamily. As to quaternary structure, homodimer or homotetramer. Heme b is required as a cofactor. Post-translationally, formation of the three residue Trp-Tyr-Met cross-link is important for the catalase, but not the peroxidase activity of the enzyme.

The enzyme catalyses H2O2 + AH2 = A + 2 H2O. It carries out the reaction 2 H2O2 = O2 + 2 H2O. In terms of biological role, bifunctional enzyme with both catalase and broad-spectrum peroxidase activity. The chain is Catalase-peroxidase 2 from Shewanella oneidensis (strain ATCC 700550 / JCM 31522 / CIP 106686 / LMG 19005 / NCIMB 14063 / MR-1).